We begin with the raw amino-acid sequence, 1044 residues long: Ribonucleoside-diphosphate reductase subunit alpha (1044 aa).

3 ATP-cone domains span residues 9–111 (YTIV…KAER), 118–217 (IAII…ARAR), and 235–325 (YVVQ…ETLG). Substrate-binding positions include T440, 455 to 456 (SC), G484, 668 to 672 (NLCTE), and 855 to 859 (PTATI). C456 and C685 are oxidised to a cystine. N668 acts as the Proton acceptor in catalysis. C670 serves as the catalytic Cysteine radical intermediate. The active-site Proton acceptor is E672.

The protein belongs to the ribonucleoside diphosphate reductase large chain family. In terms of assembly, tetramer of two alpha and two beta subunits.

The enzyme catalyses a 2'-deoxyribonucleoside 5'-diphosphate + [thioredoxin]-disulfide + H2O = a ribonucleoside 5'-diphosphate + [thioredoxin]-dithiol. Under complex allosteric control mediated by deoxynucleoside triphosphates and ATP binding. The type of nucleotide bound at the specificity site determines substrate preference. It seems probable that ATP makes the enzyme reduce CDP and UDP, dGTP favors ADP reduction and dTTP favors GDP reduction. In terms of biological role, provides the precursors necessary for DNA synthesis. Catalyzes the biosynthesis of deoxyribonucleotides from the corresponding ribonucleotides. This is Ribonucleoside-diphosphate reductase subunit alpha (nrdA) from Chlamydia pneumoniae (Chlamydophila pneumoniae).